A 661-amino-acid chain; its full sequence is Peroxisomal acyl-coenzyme A oxidase 1 (661 aa).

S26 is subject to Phosphoserine. K65 is subject to N6-acetyllysine. N6-succinyllysine is present on residues K89 and K90. T139 lines the FAD pocket. At K159 the chain carries N6-succinyllysine. An FAD-binding site is contributed by G178. Position 216 is an N6-acetyllysine (K216). K241 bears the N6-succinyllysine mark. Residues K255, K267, and K272 each carry the N6-acetyllysine modification. K349 is subject to N6-succinyllysine. The Proton acceptor role is filled by E421. K437 and K446 each carry N6-acetyllysine; alternate. An N6-succinyllysine; alternate mark is found at K437 and K446. K500 is modified (N6-acetyllysine). N6-acetyllysine; alternate is present on K512. N6-succinyllysine; alternate is present on K512. K542 is modified (N6-succinyllysine). Position 637 is an N6-acetyllysine; alternate (K637). N6-succinyllysine; alternate is present on K637. The residue at position 643 (K643) is an N6-succinyllysine. S649 is modified (phosphoserine). Residue K652 is modified to N6-acetyllysine. At K655 the chain carries N6-succinyllysine. Residues 659–661 (SKL) carry the Microbody targeting signal motif.

The protein belongs to the acyl-CoA oxidase family. Homodimer. Interacts with LONP2. The cofactor is FAD. In terms of tissue distribution, highest levels of isoform 1 are found in liver and kidney while highest levels of isoform 2 are found in white adipose tissue. Isoform 1 is expressed at higher levels than isoform 2 in liver and kidney while isoform 2 is expressed at higher levels in brain, heart, lung, muscle, white adipose tissue and testis.

Its subcellular location is the peroxisome. It carries out the reaction a 2,3-saturated acyl-CoA + O2 = a (2E)-enoyl-CoA + H2O2. The catalysed reaction is hexadecanoyl-CoA + O2 = (2E)-hexadecenoyl-CoA + H2O2. It catalyses the reaction dodecanoyl-CoA + O2 = (2E)-dodecenoyl-CoA + H2O2. The enzyme catalyses octanoyl-CoA + O2 = (2E)-octenoyl-CoA + H2O2. It carries out the reaction decanoyl-CoA + O2 = (2E)-decenoyl-CoA + H2O2. The catalysed reaction is tetradecanoyl-CoA + O2 = (2E)-tetradecenoyl-CoA + H2O2. It catalyses the reaction hexadecanedioyl-CoA + O2 = (2E)-hexadecenedioyl-CoA + H2O2. The enzyme catalyses tetracosanoyl-CoA + O2 = (2E)-tetracosenoyl-CoA + H2O2. It carries out the reaction glutaryl-CoA + O2 = (2E)-glutaconyl-CoA + H2O2. The catalysed reaction is hexanoyl-CoA + O2 = (2E)-hexenoyl-CoA + H2O2. It catalyses the reaction octadecanoyl-CoA + O2 = (2E)-octadecenoyl-CoA + H2O2. The enzyme catalyses (5Z,8Z,11Z,14Z,17Z)-eicosapentaenoyl-CoA + O2 = (2E,5Z,8Z,11Z,14Z,17Z)-icosahexaenoyl-CoA + H2O2. It carries out the reaction (6Z,9Z,12Z,15Z,18Z,21Z)-tetracosahexaenoyl-CoA + O2 = (2E,6Z,9Z,12Z,15Z,18Z,21Z)-tetracosaheptaenoyl-CoA + H2O2. It participates in lipid metabolism; peroxisomal fatty acid beta-oxidation. Functionally, involved in the initial and rate-limiting step of peroxisomal beta-oxidation of straight-chain saturated and unsaturated very-long-chain fatty acids. Catalyzes the desaturation of fatty acyl-CoAs such as palmitoyl-CoA (hexadecanoyl-CoA) to 2-trans-enoyl-CoAs ((2E)-enoyl-CoAs) such as (2E)-hexadecenoyl-CoA, and donates electrons directly to molecular oxygen (O(2)), thereby producing hydrogen peroxide (H(2)O(2)). Shows highest activity against medium-chain fatty acyl-CoAs. Shows optimum activity with a chain length of 10 carbons (decanoyl-CoA) in vitro. Its function is as follows. Is active against a much broader range of substrates and shows activity towards long-chain acyl-CoAs. This is Peroxisomal acyl-coenzyme A oxidase 1 from Mus musculus (Mouse).